We begin with the raw amino-acid sequence, 216 residues long: Probable nicotinate-nucleotide adenylyltransferase (216 aa).

It belongs to the NadD family.

It catalyses the reaction nicotinate beta-D-ribonucleotide + ATP + H(+) = deamido-NAD(+) + diphosphate. It functions in the pathway cofactor biosynthesis; NAD(+) biosynthesis; deamido-NAD(+) from nicotinate D-ribonucleotide: step 1/1. In terms of biological role, catalyzes the reversible adenylation of nicotinate mononucleotide (NaMN) to nicotinic acid adenine dinucleotide (NaAD). This Geobacter sp. (strain M21) protein is Probable nicotinate-nucleotide adenylyltransferase.